A 459-amino-acid chain; its full sequence is Glutamyl-tRNA(Gln) amidotransferase subunit A, mitochondrial (459 aa).

Catalysis depends on charge relay system residues Lys-37 and Ser-114. The Acyl-ester intermediate role is filled by Ser-138.

This sequence belongs to the amidase family. GatA subfamily. As to quaternary structure, subunit of the heterotrimeric GatFAB amidotransferase (AdT) complex, composed of A, B and F subunits.

The protein resides in the mitochondrion. The enzyme catalyses L-glutamyl-tRNA(Gln) + L-glutamine + ATP + H2O = L-glutaminyl-tRNA(Gln) + L-glutamate + ADP + phosphate + H(+). In terms of biological role, allows the formation of correctly charged Gln-tRNA(Gln) through the transamidation of misacylated Glu-tRNA(Gln) in the mitochondria. The reaction takes place in the presence of glutamine and ATP through an activated gamma-phospho-Glu-tRNA(Gln). This chain is Glutamyl-tRNA(Gln) amidotransferase subunit A, mitochondrial, found in Yarrowia lipolytica (strain CLIB 122 / E 150) (Yeast).